Here is a 505-residue protein sequence, read N- to C-terminus: Serine carboxypeptidase-like 47 (505 aa).

A signal peptide spans 1-22; it reads MEAKTFFLFMLFIFSQSWLSTS. Residues N37, N86, and N122 are each glycosylated (N-linked (GlcNAc...) asparagine). Intrachain disulfides connect C138-C378, C306-C321, and C344-C349. Residue S228 is part of the active site. N-linked (GlcNAc...) asparagine glycosylation occurs at N301. The active site involves D416. N-linked (GlcNAc...) asparagine glycans are attached at residues N432 and N444. The active site involves H473.

The protein belongs to the peptidase S10 family. Expressed in roots, flowers and siliques.

The protein localises to the secreted. Functionally, probable carboxypeptidase. The polypeptide is Serine carboxypeptidase-like 47 (SCPL47) (Arabidopsis thaliana (Mouse-ear cress)).